The chain runs to 271 residues: Formamidopyrimidine-DNA glycosylase (271 aa).

Proline 2 acts as the Schiff-base intermediate with DNA in catalysis. Glutamate 3 serves as the catalytic Proton donor. Residue lysine 58 is the Proton donor; for beta-elimination activity of the active site. The DNA site is built by histidine 91, arginine 110, and arginine 152. The FPG-type zinc-finger motif lies at 237 to 271; that stretch reads RVYGRTGLACMACETPVKQIVQGNRSTYYCPACQR. Arginine 261 functions as the Proton donor; for delta-elimination activity in the catalytic mechanism.

Belongs to the FPG family. Monomer. It depends on Zn(2+) as a cofactor.

The catalysed reaction is Hydrolysis of DNA containing ring-opened 7-methylguanine residues, releasing 2,6-diamino-4-hydroxy-5-(N-methyl)formamidopyrimidine.. The enzyme catalyses 2'-deoxyribonucleotide-(2'-deoxyribose 5'-phosphate)-2'-deoxyribonucleotide-DNA = a 3'-end 2'-deoxyribonucleotide-(2,3-dehydro-2,3-deoxyribose 5'-phosphate)-DNA + a 5'-end 5'-phospho-2'-deoxyribonucleoside-DNA + H(+). In terms of biological role, involved in base excision repair of DNA damaged by oxidation or by mutagenic agents. Acts as a DNA glycosylase that recognizes and removes damaged bases. Has a preference for oxidized purines, such as 7,8-dihydro-8-oxoguanine (8-oxoG). Has AP (apurinic/apyrimidinic) lyase activity and introduces nicks in the DNA strand. Cleaves the DNA backbone by beta-delta elimination to generate a single-strand break at the site of the removed base with both 3'- and 5'-phosphates. The polypeptide is Formamidopyrimidine-DNA glycosylase (Thioalkalivibrio sulfidiphilus (strain HL-EbGR7)).